The sequence spans 209 residues: Ribosomal RNA large subunit methyltransferase E (209 aa).

S-adenosyl-L-methionine contacts are provided by Gly-63, Trp-65, Asp-83, Asp-99, and Asp-124. Residue Lys-164 is the Proton acceptor of the active site.

The protein belongs to the class I-like SAM-binding methyltransferase superfamily. RNA methyltransferase RlmE family.

Its subcellular location is the cytoplasm. The catalysed reaction is uridine(2552) in 23S rRNA + S-adenosyl-L-methionine = 2'-O-methyluridine(2552) in 23S rRNA + S-adenosyl-L-homocysteine + H(+). Specifically methylates the uridine in position 2552 of 23S rRNA at the 2'-O position of the ribose in the fully assembled 50S ribosomal subunit. This Vibrio vulnificus (strain CMCP6) protein is Ribosomal RNA large subunit methyltransferase E.